A 607-amino-acid chain; its full sequence is Glutamyl-tRNA(Gln) amidotransferase subunit E (607 aa).

The tract at residues 399–428 (GVPEETRGANPDGTTRFLRPRPGAARMYPE) is disordered.

It belongs to the GatB/GatE family. GatE subfamily. As to quaternary structure, heterodimer of GatD and GatE.

The enzyme catalyses L-glutamyl-tRNA(Gln) + L-glutamine + ATP + H2O = L-glutaminyl-tRNA(Gln) + L-glutamate + ADP + phosphate + H(+). Allows the formation of correctly charged Gln-tRNA(Gln) through the transamidation of misacylated Glu-tRNA(Gln) in organisms which lack glutaminyl-tRNA synthetase. The reaction takes place in the presence of glutamine and ATP through an activated gamma-phospho-Glu-tRNA(Gln). The GatDE system is specific for glutamate and does not act on aspartate. The protein is Glutamyl-tRNA(Gln) amidotransferase subunit E of Pyrobaculum neutrophilum (strain DSM 2338 / JCM 9278 / NBRC 100436 / V24Sta) (Thermoproteus neutrophilus).